Consider the following 406-residue polypeptide: 1H-pyrrole-2-carbonyl-[peptidyl-carrier protein] brominase (406 aa).

The FAD site is built by A17, E36, R42, H44, I45, S48, R101, V124, D291, and V304.

It belongs to the flavin-dependent halogenase family.

The enzyme catalyses (1H-pyrrole-2-carbonyl)-[peptidyl-carrier protein] + 3 bromide + 3 FADH2 + 3 O2 = (3,4,5-tribromo-1H-pyrrole-2-carbonyl)-[peptidyl-carrier protein] + 3 FAD + 6 H2O. The catalysed reaction is (1H-pyrrole-2-carbonyl)-[peptidyl-carrier protein] + bromide + FADH2 + O2 = (5-bromo-1H-pyrrole-2-carbonyl)-[peptidyl-carrier protein] + FAD + 2 H2O. It carries out the reaction (5-bromo-1H-pyrrole-2-carbonyl)-[peptidyl-carrier protein] + bromide + FADH2 + O2 = (4,5-dibromo-1H-pyrrole-2-carbonyl)-[peptidyl-carrier protein] + FAD + 2 H2O. It catalyses the reaction (4,5-dibromo-1H-pyrrole-2-carbonyl)-[peptidyl-carrier protein] + bromide + FADH2 + O2 = (3,4,5-tribromo-1H-pyrrole-2-carbonyl)-[peptidyl-carrier protein] + FAD + 2 H2O. In terms of biological role, brominase involved in the biosynthesis of polybrominated aromatic organic compounds. Catalyzes three successive rounds of bromination of pyrrolyl-S-Bmp1 to produce mono-, di- and tribromopyrrolyl-S-Bmp1. The sequence is that of 1H-pyrrole-2-carbonyl-[peptidyl-carrier protein] brominase from Pseudoalteromonas luteoviolacea (strain 2ta16).